The primary structure comprises 398 residues: Delta-aminolevulinic acid dehydratase, chloroplastic (398 aa).

The tract at residues 48 to 87 is disordered; the sequence is VPEAPPVPPTPASPAGTPVVPSLPIQRRPRRNRRSPALRS. Residues 50 to 59 show a composition bias toward pro residues; sequence EAPPVPPTPA. Over residues 60 to 69 the composition is skewed to low complexity; the sequence is SPAGTPVVPS. Over residues 74–83 the composition is skewed to basic residues; it reads RRPRRNRRSP. Lys266 acts as the Schiff-base intermediate with substrate in catalysis. 5-aminolevulinate contacts are provided by Arg276 and Lys288. Glu304 provides a ligand contact to Mg(2+). The Schiff-base intermediate with substrate role is filled by Lys319. 5-aminolevulinate-binding residues include Ser345 and Tyr384.

It belongs to the ALAD family. As to quaternary structure, homooctamer; formed by oligomerization of dimers. Probably also forms lower oligomers. Mg(2+) serves as cofactor.

The protein localises to the plastid. Its subcellular location is the chloroplast. It carries out the reaction 2 5-aminolevulinate = porphobilinogen + 2 H2O + H(+). It participates in porphyrin-containing compound metabolism; protoporphyrin-IX biosynthesis; coproporphyrinogen-III from 5-aminolevulinate: step 1/4. Its activity is regulated as follows. Activated by magnesium. Inhibited by succinyl acetone. Enzyme activity may depend on the oligomerization state, where the fully active octamer may dissociate and reassemble into less active lower oligomers. Its function is as follows. Catalyzes an early step in the biosynthesis of tetrapyrroles. Binds two molecules of 5-aminolevulinate per subunit, each at a distinct site, and catalyzes their condensation to form porphobilinogen. The polypeptide is Delta-aminolevulinic acid dehydratase, chloroplastic (HEMB) (Pisum sativum (Garden pea)).